The chain runs to 270 residues: Homeobox protein Hox-D12 (270 aa).

A disordered region spans residues 102–122; it reads APEAAAGPEERGRTRPSFAPE. Residues 202–261 constitute a DNA-binding region (homeobox); the sequence is ARKKRKPYTKQQIAELENEFLVNEFINRQKRKELSNRLNLSDQQVKIWFQNRRMKKKRVV.

This sequence belongs to the Abd-B homeobox family.

Its subcellular location is the nucleus. Sequence-specific transcription factor which is part of a developmental regulatory system that provides cells with specific positional identities on the anterior-posterior axis. The sequence is that of Homeobox protein Hox-D12 (HOXD12) from Homo sapiens (Human).